The following is a 240-amino-acid chain: 1-(5-phosphoribosyl)-5-[(5-phosphoribosylamino)methylideneamino] imidazole-4-carboxamide isomerase (240 aa).

Aspartate 8 (proton acceptor) is an active-site residue. The active-site Proton donor is aspartate 129.

This sequence belongs to the HisA/HisF family.

It localises to the cytoplasm. It carries out the reaction 1-(5-phospho-beta-D-ribosyl)-5-[(5-phospho-beta-D-ribosylamino)methylideneamino]imidazole-4-carboxamide = 5-[(5-phospho-1-deoxy-D-ribulos-1-ylimino)methylamino]-1-(5-phospho-beta-D-ribosyl)imidazole-4-carboxamide. Its pathway is amino-acid biosynthesis; L-histidine biosynthesis; L-histidine from 5-phospho-alpha-D-ribose 1-diphosphate: step 4/9. The protein is 1-(5-phosphoribosyl)-5-[(5-phosphoribosylamino)methylideneamino] imidazole-4-carboxamide isomerase of Herpetosiphon aurantiacus (strain ATCC 23779 / DSM 785 / 114-95).